Reading from the N-terminus, the 278-residue chain is Dehydrogenase/reductase SDR family member 4 (278 aa).

36 to 60 (LVTASTDGIGFAIARRLAQDGAHVV) serves as a coordination point for NADP(+). The residue at position 92 (Lys-92) is an N6-acetyllysine; alternate. Lys-92 carries the N6-succinyllysine; alternate modification. N6-acetyllysine is present on Lys-105. The residue at position 140 (Ile-140) is a Phosphoserine. Position 169 (Ser-169) interacts with substrate. The Proton acceptor role is filled by Tyr-182. Lys-186 provides a ligand contact to NADP(+). Lys-216 carries the N6-acetyllysine; alternate modification. The residue at position 216 (Lys-216) is an N6-succinyllysine; alternate. A Phosphoserine modification is found at Ser-220. An N6-succinyllysine mark is found at Lys-227 and Lys-234. Residues 276-278 (SRL) carry the Peroxisomal targeting signal motif.

This sequence belongs to the short-chain dehydrogenases/reductases (SDR) family. As to quaternary structure, homotetramer. In terms of tissue distribution, predominantly expressed in normal cervix (at protein level). Expressed in some neoplastic cervical tissues, but not in normal cervix (at protein level). As to expression, expressed in a few neoplastic cervical tissues. In terms of tissue distribution, high expression in liver.

The protein localises to the peroxisome. Its subcellular location is the nucleus. It catalyses the reaction a secondary alcohol + NADP(+) = a ketone + NADPH + H(+). The enzyme catalyses 3beta-hydroxy-5beta-pregnane-20-one + NADP(+) = 5beta-pregnan-3,20-dione + NADPH + H(+). The catalysed reaction is 5beta-dihydrotestosterone + NADPH + H(+) = 5beta-androstane-3beta,17beta-diol + NADP(+). It carries out the reaction 5beta-androstane-3,17-dione + NADPH + H(+) = 3beta-hydroxy-5beta-androstane-17-one + NADP(+). It catalyses the reaction isatin + NADPH + H(+) = 3-hydroxyindolin-2-one + NADP(+). The enzyme catalyses lithocholate + NADP(+) = 3-oxo-5beta-cholan-24-oate + NADPH + H(+). The catalysed reaction is 3-oxo-5beta-cholan-24-oate + NADPH + H(+) = isolithocholate + NADP(+). Inhibited by flavonoids (quercetin and genistein), cetylpyridium chloride, phenylhexane and valproic acid. Low inhibition is observed with fatty acids (myristic acid and lauric acid). No significant inhibition is observed with barbital, dicumarol, indomethacin, metyrapone, ethacrynic acid, disulfiram, hexestrol and benzodiazepines (diazepam and nitrazepam). Its function is as follows. NADPH-dependent oxidoreductase which catalyzes the reduction of a variety of compounds bearing carbonyl groups including ketosteroids, alpha-dicarbonyl compounds, aldehydes, aromatic ketones and quinones. Reduces 3-ketosteroids and benzil into 3beta-hydroxysteroids and R-benzoin, respectively, in contrast to the stereoselectivity of non-primate DHRS4s which produce 3alpha-hydroxysteroids and S-benzoin. Diplays low activity toward all-trans-retinal and no activity toward 9-cis-retinal as compared to non-primate mammals. In the reverse reaction, catalyze the NAD-dependent oxidation of 3beta-hydroxysteroids and alcohol, but with much lower efficiency. Involved in the metabolism of 3beta-hydroxysteroids, isatin and xenobiotic carbonyl compounds. Functionally, no detected catalytic activity in vitro, possibly due to the lack of catalytic site. NADPH-dependent oxidoreductase which catalyzes the reduction of a variety of compounds bearing carbonyl groups including ketosteroids, alpha-dicarbonyl compounds, aldehydes, aromatic ketones and quinones. Involved in the metabolism of 3beta-hydroxysteroids, isatin and xenobiotic carbonyl compounds. Has a higher catalytic activity for xenobiotic alpha-dicarbonyl compounds, sucha as benzil, than isoform 1 and is involved in benzil detoxification. This Homo sapiens (Human) protein is Dehydrogenase/reductase SDR family member 4.